Here is a 305-residue protein sequence, read N- to C-terminus: uncharacterized protein (305 aa).

The tract at residues 53–185 is disordered; the sequence is SGRIGDGDDG…TGPRSSRTVG (133 aa). 2 stretches are compositionally biased toward basic and acidic residues: residues 95 to 116 and 128 to 142; these read VEERNLVDRCNRMMNETEERPT and GSERNGETERPRSEG. Over residues 161-171 the composition is skewed to polar residues; that stretch reads GNTQAPSQSAE. An RING-type; atypical zinc finger spans residues 260 to 302; that stretch reads CAICMSNFIKNQRLRVLPCDHRFHVGCVDKWLLGHSNKCPVCR.

This is an uncharacterized protein from Encephalitozoon cuniculi (strain GB-M1) (Microsporidian parasite).